A 167-amino-acid polypeptide reads, in one-letter code: Small ribosomal subunit protein uS5 (167 aa).

Positions 12-75 (LQEKLIAVNR…EKARRNMTTI (64 aa)) constitute an S5 DRBM domain.

The protein belongs to the universal ribosomal protein uS5 family. As to quaternary structure, part of the 30S ribosomal subunit. Contacts proteins S4 and S8.

Its function is as follows. With S4 and S12 plays an important role in translational accuracy. Functionally, located at the back of the 30S subunit body where it stabilizes the conformation of the head with respect to the body. This Vibrio parahaemolyticus serotype O3:K6 (strain RIMD 2210633) protein is Small ribosomal subunit protein uS5.